The primary structure comprises 1416 residues: Nucleoporin NUP170 (1416 aa).

Disordered stretches follow at residues 1–26 (MEPMTPMRPIPGAYVNTPAPPTANPA) and 50–69 (APLASTMAPGPEINSGLMTP).

Belongs to the non-repetitive/WGA-negative nucleoporin family. Component of the nuclear pore complex (NPC). NPC constitutes the exclusive means of nucleocytoplasmic transport. NPCs allow the passive diffusion of ions and small molecules and the active, nuclear transport receptor-mediated bidirectional transport of macromolecules such as proteins, RNAs, ribonucleoparticles (RNPs), and ribosomal subunits across the nuclear envelope. Due to its 8-fold rotational symmetry, all subunits are present with 8 copies or multiples thereof. Part of a tetrameric NUP192-NUP170-NIC96-NUP53 or NUP188-NUP170-NIC96-NUP53 module.

The protein resides in the nucleus. The protein localises to the nuclear pore complex. Its subcellular location is the nucleus membrane. Functions as a component of the nuclear pore complex (NPC). NPC components, collectively referred to as nucleoporins (NUPs), can play the role of both NPC structural components and of docking or interaction partners for transiently associated nuclear transport factors. NUP170 probably plays an important role in NPC assembly and organization. The sequence is that of Nucleoporin NUP170 (NUP170) from Chaetomium thermophilum (strain DSM 1495 / CBS 144.50 / IMI 039719) (Thermochaetoides thermophila).